Here is a 482-residue protein sequence, read N- to C-terminus: Adenylosuccinate lyase (482 aa).

Residues Arg14–Tyr15, Arg82–Asp84, and Thr108–Ser109 each bind substrate. His156 serves as the catalytic Proton donor/acceptor. Gln238 contacts substrate. The Proton donor/acceptor role is filled by Ser286. Substrate contacts are provided by Arg300, Arg326, Ser331, and Arg335.

It belongs to the lyase 1 family. Adenylosuccinate lyase subfamily. In terms of assembly, homotetramer. Residues from neighboring subunits contribute catalytic and substrate-binding residues to each active site.

It catalyses the reaction N(6)-(1,2-dicarboxyethyl)-AMP = fumarate + AMP. The catalysed reaction is (2S)-2-[5-amino-1-(5-phospho-beta-D-ribosyl)imidazole-4-carboxamido]succinate = 5-amino-1-(5-phospho-beta-D-ribosyl)imidazole-4-carboxamide + fumarate. It participates in purine metabolism; AMP biosynthesis via de novo pathway; AMP from IMP: step 2/2. Its pathway is purine metabolism; IMP biosynthesis via de novo pathway; 5-amino-1-(5-phospho-D-ribosyl)imidazole-4-carboxamide from 5-amino-1-(5-phospho-D-ribosyl)imidazole-4-carboxylate: step 2/2. This is Adenylosuccinate lyase (ade8) from Schizosaccharomyces pombe (strain 972 / ATCC 24843) (Fission yeast).